Consider the following 210-residue polypeptide: Probable transcriptional regulator ycf29 (210 aa).

The Response regulatory domain occupies 3 to 119; it reads NILILDTDIG…ELVVIIEGVL (117 aa). A 4-aspartylphosphate modification is found at aspartate 52. The 66-residue stretch at 142 to 207 folds into the HTH luxR-type domain; that stretch reads SNNLKINFTP…ELVKYALENN (66 aa).

Its subcellular location is the plastid. It localises to the cyanelle. The polypeptide is Probable transcriptional regulator ycf29 (ycf29) (Cyanophora paradoxa).